We begin with the raw amino-acid sequence, 160 residues long: uncharacterized protein (160 aa).

The N-terminal stretch at 1 to 18 (MELLSLAILSSFFAVANQ) is a signal peptide.

This is an uncharacterized protein from Caenorhabditis elegans.